The primary structure comprises 163 residues: MEIERVAELILLKDKNFKEKERLRDLLREYIKTKDEISYLENILEDFENLDVNLKHLKRDADIIKSILPRLSKFTNIPVFMKIVKMLEAVEKIDTEDLESVRWNINKEIEELNDKLKTLENELRVIIINEALSKIGTSNLEEFSKYLENLRYEEKNQKEEAYN.

This is an uncharacterized protein from Methanocaldococcus jannaschii (strain ATCC 43067 / DSM 2661 / JAL-1 / JCM 10045 / NBRC 100440) (Methanococcus jannaschii).